A 335-amino-acid chain; its full sequence is 4-hydroxy-3-methylbut-2-enyl diphosphate reductase 2 (335 aa).

A [4Fe-4S] cluster-binding site is contributed by Cys37. Residues His66 and His99 each contribute to the (2E)-4-hydroxy-3-methylbut-2-enyl diphosphate site. Dimethylallyl diphosphate contacts are provided by His66 and His99. Isopentenyl diphosphate is bound by residues His66 and His99. Cys121 contacts [4Fe-4S] cluster. His149 contributes to the (2E)-4-hydroxy-3-methylbut-2-enyl diphosphate binding site. His149 contributes to the dimethylallyl diphosphate binding site. His149 contributes to the isopentenyl diphosphate binding site. The active-site Proton donor is Glu151. Thr189 serves as a coordination point for (2E)-4-hydroxy-3-methylbut-2-enyl diphosphate. Cys219 lines the [4Fe-4S] cluster pocket. 4 residues coordinate (2E)-4-hydroxy-3-methylbut-2-enyl diphosphate: Ser247, Ser248, Asn249, and Ser292. Dimethylallyl diphosphate contacts are provided by Ser247, Ser248, Asn249, and Ser292. Residues Ser247, Ser248, Asn249, and Ser292 each coordinate isopentenyl diphosphate.

It belongs to the IspH family. [4Fe-4S] cluster is required as a cofactor.

The catalysed reaction is isopentenyl diphosphate + 2 oxidized [2Fe-2S]-[ferredoxin] + H2O = (2E)-4-hydroxy-3-methylbut-2-enyl diphosphate + 2 reduced [2Fe-2S]-[ferredoxin] + 2 H(+). It carries out the reaction dimethylallyl diphosphate + 2 oxidized [2Fe-2S]-[ferredoxin] + H2O = (2E)-4-hydroxy-3-methylbut-2-enyl diphosphate + 2 reduced [2Fe-2S]-[ferredoxin] + 2 H(+). It functions in the pathway isoprenoid biosynthesis; dimethylallyl diphosphate biosynthesis; dimethylallyl diphosphate from (2E)-4-hydroxy-3-methylbutenyl diphosphate: step 1/1. It participates in isoprenoid biosynthesis; isopentenyl diphosphate biosynthesis via DXP pathway; isopentenyl diphosphate from 1-deoxy-D-xylulose 5-phosphate: step 6/6. In terms of biological role, catalyzes the conversion of 1-hydroxy-2-methyl-2-(E)-butenyl 4-diphosphate (HMBPP) into a mixture of isopentenyl diphosphate (IPP) and dimethylallyl diphosphate (DMAPP). Acts in the terminal step of the DOXP/MEP pathway for isoprenoid precursor biosynthesis. Has a higher activity compared with LytB2. Is essential for M.tuberculosis growth in vitro. This chain is 4-hydroxy-3-methylbut-2-enyl diphosphate reductase 2, found in Mycobacterium tuberculosis (strain ATCC 25618 / H37Rv).